We begin with the raw amino-acid sequence, 123 residues long: Large ribosomal subunit protein uL18 (123 aa).

It belongs to the universal ribosomal protein uL18 family. Part of the 50S ribosomal subunit; part of the 5S rRNA/L5/L18/L25 subcomplex. Contacts the 5S and 23S rRNAs.

Its function is as follows. This is one of the proteins that bind and probably mediate the attachment of the 5S RNA into the large ribosomal subunit, where it forms part of the central protuberance. The protein is Large ribosomal subunit protein uL18 of Bifidobacterium longum (strain DJO10A).